Here is a 209-residue protein sequence, read N- to C-terminus: Large ribosomal subunit protein uL3 (209 aa).

Residues 127–147 (YSRGPMGHGSKSHRVAGARSA) are disordered.

Belongs to the universal ribosomal protein uL3 family. Part of the 50S ribosomal subunit. Forms a cluster with proteins L14 and L19.

One of the primary rRNA binding proteins, it binds directly near the 3'-end of the 23S rRNA, where it nucleates assembly of the 50S subunit. This is Large ribosomal subunit protein uL3 from Finegoldia magna (strain ATCC 29328 / DSM 20472 / WAL 2508) (Peptostreptococcus magnus).